The primary structure comprises 677 residues: Secretogranin-1 (677 aa).

An N-terminal signal peptide occupies residues 1 to 20; that stretch reads MQPTLLLSLLGAVGLAAVNS. The cysteines at positions 36 and 57 are disulfide-linked. Basic and acidic residues-rich tracts occupy residues 64-100 and 118-136; these read SRKD…ESSS and ADTE…RADE. The disordered stretch occupies residues 64 to 463; the sequence is SRKDVKDKET…DKARRHPQGA (400 aa). The residue at position 79 (Thr-79) is a Phosphothreonine. Ser-93, Ser-99, and Ser-100 each carry phosphoserine. O-linked (Xyl...) (chondroitin sulfate) serine glycosylation occurs at Ser-93. The O-glycosylated at one site stretch occupies residues 116-120; it reads TKADT. Ser-130 carries the phosphoserine; by FAM20C modification. Ser-149 is modified (phosphoserine). Basic and acidic residues-rich tracts occupy residues 150-162, 172-190, and 200-236; these read EEVK…KSQR, NYQK…HLEE, and NERK…EKSS. The residue at position 183 (Ser-183) is a Phosphoserine. Position 225 is a phosphoserine; by FAM20C (Ser-225). Ser-239 is a glycosylation site (O-linked (Xyl...) (chondroitin sulfate) serine). Phosphoserine is present on residues Ser-259 and Ser-263. The segment covering 262-272 has biased composition (acidic residues); it reads ESEEGEEDATS. Basic residues predominate over residues 277 to 287; the sequence is RRTRPRHHHGR. Residues Ser-293, Ser-294, Ser-311, and Ser-335 each carry the phosphoserine modification. Tyr-341 carries the sulfotyrosine modification. Basic and acidic residues predominate over residues 359 to 372; the sequence is WERYRGRGSEEYRA. Residues Ser-367, Ser-377, and Ser-380 each carry the phosphoserine; by FAM20C modification. 2 stretches are compositionally biased toward basic and acidic residues: residues 384-415 and 433-455; these read EDKR…EPGK and DTRE…QMDK. Residue Tyr-401 is modified to Phosphotyrosine. Ser-405 carries the phosphoserine modification. At Tyr-474 the chain carries Sulfotyrosine. Positions 475-512 are disordered; that stretch reads GEEGAPGKWQQQGDLQDTKENREEARFQDKQYSSHHTA. Residues 490-503 show a composition bias toward basic and acidic residues; that stretch reads QDTKENREEARFQD. 2 positions are modified to phosphoserine: Ser-533 and Ser-534. At Tyr-566 the chain carries Sulfotyrosine. At Ser-617 the chain carries Phosphoserine. The segment at 622–653 is disordered; sequence DFYDSEEPVSTHQEAENEKDRADQTVLTEDEK. Position 624 is a sulfotyrosine (Tyr-624). Phosphoserine occurs at positions 626 and 631. Over residues 634–653 the composition is skewed to basic and acidic residues; it reads QEAENEKDRADQTVLTEDEK.

This sequence belongs to the chromogranin/secretogranin protein family. Interacts with ITPR1 in the secretory granules. Post-translationally, extensively processed by limited proteolysis at conserved basic residues. Alternative processing are seen in different tissues. O-glycosylated. As to expression, detected in cerebrospinal fluid and urine (at protein level). Expressed in the adrenal medulla, and in pheochromocytoma. Not expressed in liver.

Its subcellular location is the secreted. Its function is as follows. Secretogranin-1 is a neuroendocrine secretory granule protein, which may be the precursor for other biologically active peptides. The chain is Secretogranin-1 (CHGB) from Homo sapiens (Human).